A 637-amino-acid polypeptide reads, in one-letter code: Chaperone protein HtpG (637 aa).

An a; substrate-binding region spans residues 1–334 (MQDVVNSEKL…SSDLPLNISR (334 aa)). Positions 335-558 (ETLQNNKVIE…DGSMDIRMER (224 aa)) are b. Residues 559-637 (FLREQKQLNY…MNNVLVKVYQ (79 aa)) are c.

Belongs to the heat shock protein 90 family. Homodimer.

Its subcellular location is the cytoplasm. In terms of biological role, molecular chaperone. Has ATPase activity. The polypeptide is Chaperone protein HtpG (Ehrlichia canis (strain Jake)).